Here is a 308-residue protein sequence, read N- to C-terminus: Glycine--tRNA ligase alpha subunit (308 aa).

It belongs to the class-II aminoacyl-tRNA synthetase family. In terms of assembly, tetramer of two alpha and two beta subunits.

The protein resides in the cytoplasm. The enzyme catalyses tRNA(Gly) + glycine + ATP = glycyl-tRNA(Gly) + AMP + diphosphate. This chain is Glycine--tRNA ligase alpha subunit, found in Brucella canis (strain ATCC 23365 / NCTC 10854 / RM-666).